The chain runs to 584 residues: A-type ATP synthase subunit A (584 aa).

Residue 234–241 coordinates ATP; the sequence is GPFGSGKT.

Belongs to the ATPase alpha/beta chains family. In terms of assembly, has multiple subunits with at least A(3), B(3), C, D, E, F, H, I and proteolipid K(x).

Its subcellular location is the cell membrane. The catalysed reaction is ATP + H2O + 4 H(+)(in) = ADP + phosphate + 5 H(+)(out). Functionally, component of the A-type ATP synthase that produces ATP from ADP in the presence of a proton gradient across the membrane. The A chain is the catalytic subunit. The chain is A-type ATP synthase subunit A from Methanoculleus marisnigri (strain ATCC 35101 / DSM 1498 / JR1).